A 146-amino-acid chain; its full sequence is Cytochrome c oxidase subunit 5A, mitochondrial (146 aa).

The transit peptide at 1–37 (MLAAALRRCTAAAAARGLLHPVSAPSPAAAVCSIRCY) directs the protein to the mitochondrion. An SIFI-degron motif is present at residues 2–16 (LAAALRRCTAAAAAR). Lys83 and Lys109 each carry N6-acetyllysine. Thr137 carries the post-translational modification Phosphothreonine.

In terms of assembly, component of the cytochrome c oxidase (complex IV, CIV), a multisubunit enzyme composed of 14 subunits. The complex is composed of a catalytic core of 3 subunits MT-CO1, MT-CO2 and MT-CO3, encoded in the mitochondrial DNA, and 11 supernumerary subunits COX4I, COX5A, COX5B, COX6A, COX6B, COX6C, COX7A, COX7B, COX7C, COX8 and NDUFA4, which are encoded in the nuclear genome. The complex exists as a monomer or a dimer and forms supercomplexes (SCs) in the inner mitochondrial membrane with NADH-ubiquinone oxidoreductase (complex I, CI) and ubiquinol-cytochrome c oxidoreductase (cytochrome b-c1 complex, complex III, CIII), resulting in different assemblies (supercomplex SCI(1)III(2)IV(1) and megacomplex MCI(2)III(2)IV(2)). Interacts with AFG1L. Interacts with RAB5IF. Post-translationally, in response to mitochondrial stress, the precursor protein is ubiquitinated by the SIFI complex in the cytoplasm before mitochondrial import, leading to its degradation. Within the SIFI complex, UBR4 initiates ubiquitin chain that are further elongated or branched by KCMF1. In terms of tissue distribution, expressed in the head of epididymal sperm but not in testicular sperm (at protein level).

It is found in the mitochondrion inner membrane. It participates in energy metabolism; oxidative phosphorylation. Its function is as follows. Component of the cytochrome c oxidase, the last enzyme in the mitochondrial electron transport chain which drives oxidative phosphorylation. The respiratory chain contains 3 multisubunit complexes succinate dehydrogenase (complex II, CII), ubiquinol-cytochrome c oxidoreductase (cytochrome b-c1 complex, complex III, CIII) and cytochrome c oxidase (complex IV, CIV), that cooperate to transfer electrons derived from NADH and succinate to molecular oxygen, creating an electrochemical gradient over the inner membrane that drives transmembrane transport and the ATP synthase. Cytochrome c oxidase is the component of the respiratory chain that catalyzes the reduction of oxygen to water. Electrons originating from reduced cytochrome c in the intermembrane space (IMS) are transferred via the dinuclear copper A center (CU(A)) of subunit 2 and heme A of subunit 1 to the active site in subunit 1, a binuclear center (BNC) formed by heme A3 and copper B (CU(B)). The BNC reduces molecular oxygen to 2 water molecules using 4 electrons from cytochrome c in the IMS and 4 protons from the mitochondrial matrix. The protein is Cytochrome c oxidase subunit 5A, mitochondrial (Cox5a) of Rattus norvegicus (Rat).